Here is a 664-residue protein sequence, read N- to C-terminus: Macoilin (664 aa).

4 helical membrane-spanning segments follow: residues 28–48 (TFLY…DFVL), 75–95 (AFSV…LLFI), 120–140 (VCLP…AIRF), and 154–174 (FAAH…KSYV). The span at 253–265 (REKGKEKDKDAKK) shows a compositional bias: basic and acidic residues. Positions 253 to 274 (REKGKEKDKDAKKHNLGINNNN) are disordered. Residue S305 is modified to Phosphoserine. Over residues 320–348 (KNYKNASGVVNSSPRSHSATNGSIPSSSS) the composition is skewed to polar residues. The tract at residues 320-375 (KNYKNASGVVNSSPRSHSATNGSIPSSSSKNEKKQKCTSKGPSAHKDLMENCIPNN) is disordered. N324 carries an N-linked (GlcNAc...) asparagine glycan. Phosphoserine is present on S332. N340 and N452 each carry an N-linked (GlcNAc...) asparagine glycan. Residues 630–664 (TSPLSPVSPHYSSKFVETSPSGLDPNASVYQPLKK) form a disordered region. S631 and S634 each carry phosphoserine. N655 carries N-linked (GlcNAc...) asparagine glycosylation.

Belongs to the macoilin family. In terms of tissue distribution, strong expression in whole nervous system up to 12.5 dpc. Highly expressed in all neuronal differentiation fields from 14.5 dpc to birth, with highest expression in the telencephalic cortical plate and mitral cells in the olfactory bulb, and lower expression in neuronal progenitor zones. Progressively decreased expression in fields of neuron precursor proliferation from 14.5 dpc and virtually undetectable there by 17.5 dpc. No significant expression detected outside the nervous system. After birth, significant expression remains in the cerebellum, olfactory bulb and hippocampus.

It is found in the rough endoplasmic reticulum membrane. It localises to the nucleus membrane. In terms of biological role, plays a role in the regulation of neuronal activity. This is Macoilin (Maco1) from Mus musculus (Mouse).